The following is a 554-amino-acid chain: 2-succinyl-5-enolpyruvyl-6-hydroxy-3-cyclohexene-1-carboxylate synthase (554 aa).

It belongs to the TPP enzyme family. MenD subfamily. As to quaternary structure, homodimer. Mg(2+) is required as a cofactor. The cofactor is Mn(2+). Requires thiamine diphosphate as cofactor.

The enzyme catalyses isochorismate + 2-oxoglutarate + H(+) = 5-enolpyruvoyl-6-hydroxy-2-succinyl-cyclohex-3-ene-1-carboxylate + CO2. The protein operates within quinol/quinone metabolism; 1,4-dihydroxy-2-naphthoate biosynthesis; 1,4-dihydroxy-2-naphthoate from chorismate: step 2/7. Its pathway is quinol/quinone metabolism; menaquinone biosynthesis. Catalyzes the thiamine diphosphate-dependent decarboxylation of 2-oxoglutarate and the subsequent addition of the resulting succinic semialdehyde-thiamine pyrophosphate anion to isochorismate to yield 2-succinyl-5-enolpyruvyl-6-hydroxy-3-cyclohexene-1-carboxylate (SEPHCHC). The chain is 2-succinyl-5-enolpyruvyl-6-hydroxy-3-cyclohexene-1-carboxylate synthase from Lactococcus lactis subsp. cremoris (strain SK11).